The primary structure comprises 167 residues: Large ribosomal subunit protein uL10 (167 aa).

Belongs to the universal ribosomal protein uL10 family. As to quaternary structure, part of the ribosomal stalk of the 50S ribosomal subunit. The N-terminus interacts with L11 and the large rRNA to form the base of the stalk. The C-terminus forms an elongated spine to which L12 dimers bind in a sequential fashion forming a multimeric L10(L12)X complex.

Its function is as follows. Forms part of the ribosomal stalk, playing a central role in the interaction of the ribosome with GTP-bound translation factors. In Erwinia tasmaniensis (strain DSM 17950 / CFBP 7177 / CIP 109463 / NCPPB 4357 / Et1/99), this protein is Large ribosomal subunit protein uL10.